Reading from the N-terminus, the 560-residue chain is DNA ligase B (560 aa).

The N6-AMP-lysine intermediate role is filled by Lys124.

It belongs to the NAD-dependent DNA ligase family. LigB subfamily.

It catalyses the reaction NAD(+) + (deoxyribonucleotide)n-3'-hydroxyl + 5'-phospho-(deoxyribonucleotide)m = (deoxyribonucleotide)n+m + AMP + beta-nicotinamide D-nucleotide.. Functionally, catalyzes the formation of phosphodiester linkages between 5'-phosphoryl and 3'-hydroxyl groups in double-stranded DNA using NAD as a coenzyme and as the energy source for the reaction. The polypeptide is DNA ligase B (Shigella flexneri).